The primary structure comprises 671 residues: MATTTPPETKSAAWWNYFFLYDGSKVKGEGDPTRAGICYFYPPQTLLDQQELLCGQLAGVVRCLWDLSGTPPMLIRMRNLKFAIRADGDYLWALGCGVEISDASCRQFLDQLIGFFHFYMGPVSLAYKSHPQEELSLQWDTSITQVLRSTSESHRIFNALWNLDRTKVEPLLLLKAALILQTCQRSPHVLAGCILYKGLIVNSQLLPSLTAKVLLHQTVPADQRLPGAGAAPQETGAALPPDVQITSVFLSEEEVASLHEFPVEHETRLQGSSVQYPPWDQSSPTQAEDAWASAAIPEPTPHDGACPSGSGADERLPRLEQECAGPTGLCTTACGQGSGLSSRLQKELCLSREELDSSEMHVSEAQEAFPPLPALGDLETLHSSHSAPTLPEDTAICSCLHPCPLERLPESGRLGQLADLPLTNGQTQVPGTDPLPSSMPVALPPQHPVGVEPSVEPYGNGAQESHSALPRSSRSPDSPGPSPSADRTGFKPSPSGRHAGLVPMNLYTHSVNGLVLSLLAEETLLSDTAAIEEVYHSSLASLNGLEVHLKETLPRDEASLTSSTYNFLHYDRIQSVLSANLPLVTAPQDRRFLQAVNLMHSDFALLPMLYEMTIRNASTAVYACSSPAQETYFQQLAPTARSSGFPNPQDCAFSLAGKAKQKLLKHGVNLL.

The span at 269 to 286 (LQGSSVQYPPWDQSSPTQ) shows a compositional bias: polar residues. Disordered stretches follow at residues 269–291 (LQGS…EDAW) and 417–497 (LADL…PSGR). The span at 467-477 (SALPRSSRSPD) shows a compositional bias: low complexity.

As to quaternary structure, component of the biogenesis of lysosome-related organelles complex-3 (or BLOC-3), a heterodimer of HPS1 and HPS4. HPS4 and the BLOC-3 complex interact with the GTP-bound form of RAB9B but not with the GDP-bound form of RAB9B. HPS4 and the BLOC-3 complex interact with the GTP-bound form of RAB9A but not with the GDP-bound form of RAB9A. HPS4 does not interact RAB4A and RAB7A. As to expression, highly expressed in heart, brain, liver and testis. Expressed at lower level in skeletal muscle.

Component of the BLOC-3 complex, a complex that acts as a guanine exchange factor (GEF) for RAB32 and RAB38, promotes the exchange of GDP to GTP, converting them from an inactive GDP-bound form into an active GTP-bound form. The BLOC-3 complex plays an important role in the control of melanin production and melanosome biogenesis and promotes the membrane localization of RAB32 and RAB38. The polypeptide is BLOC-3 complex member HPS4 (Hps4) (Mus musculus (Mouse)).